We begin with the raw amino-acid sequence, 294 residues long: Proteasome subunit beta 1 (294 aa).

A propeptide spans 1–65 (MTADRPALRT…MESGDLAPHG (65 aa)) (removed in mature form; by autocatalysis). Residue T66 is the Nucleophile of the active site.

Belongs to the peptidase T1B family. In terms of assembly, the 20S proteasome core is composed of 14 alpha and 14 beta subunits that assemble into four stacked heptameric rings, resulting in a barrel-shaped structure. The two inner rings, each composed of seven catalytic beta subunits, are sandwiched by two outer rings, each composed of seven alpha subunits. All four combinations of alpha- and beta-subunits (beta2-alpha1, beta2-alpha2, beta1-alpha2 and beta1-alpha1) yield fully assembled and proteolytically active proteasomes. The catalytic chamber with the active sites is on the inside of the barrel. Has probably a gated structure, the ends of the cylinder being occluded by the N-termini of the alpha-subunits. Is likely capped by the proteasome-associated ATPase, ARC.

The protein resides in the cytoplasm. It carries out the reaction Cleavage of peptide bonds with very broad specificity.. The protein operates within protein degradation; proteasomal Pup-dependent pathway. The formation of the proteasomal ATPase ARC-20S proteasome complex, likely via the docking of the C-termini of ARC into the intersubunit pockets in the alpha-rings, may trigger opening of the gate for substrate entry. Interconversion between the open-gate and close-gate conformations leads to a dynamic regulation of the 20S proteasome proteolysis activity. Functionally, component of the proteasome core, a large protease complex with broad specificity involved in protein degradation. The R.erythropolis proteasomes are able to cleave oligopeptides after Tyr, Phe and Leu, very poorly after Arg but not after Glu. Thus, displays chymotrypsin-like activity, low trypsin-like activity but no caspase-like activity. This chain is Proteasome subunit beta 1, found in Rhodococcus erythropolis (Arthrobacter picolinophilus).